We begin with the raw amino-acid sequence, 486 residues long: Malonate-semialdehyde dehydrogenase (486 aa).

5 residues coordinate NAD(+): Phe-154, Lys-178, Glu-181, Arg-182, and Ser-231. Cys-286 (nucleophile) is an active-site residue. Residue Glu-386 participates in NAD(+) binding.

It belongs to the aldehyde dehydrogenase family. IolA subfamily. In terms of assembly, homotetramer.

The enzyme catalyses 3-oxopropanoate + NAD(+) + CoA + H2O = hydrogencarbonate + acetyl-CoA + NADH + H(+). The catalysed reaction is 2-methyl-3-oxopropanoate + NAD(+) + CoA + H2O = propanoyl-CoA + hydrogencarbonate + NADH + H(+). Its pathway is polyol metabolism; myo-inositol degradation into acetyl-CoA; acetyl-CoA from myo-inositol: step 7/7. In terms of biological role, catalyzes the oxidation of malonate semialdehyde (MSA) and methylmalonate semialdehyde (MMSA) into acetyl-CoA and propanoyl-CoA, respectively. Is involved in a myo-inositol catabolic pathway. Bicarbonate, and not CO2, is the end-product of the enzymatic reaction. This Bacillus cereus (strain ATCC 14579 / DSM 31 / CCUG 7414 / JCM 2152 / NBRC 15305 / NCIMB 9373 / NCTC 2599 / NRRL B-3711) protein is Malonate-semialdehyde dehydrogenase.